A 264-amino-acid chain; its full sequence is MKQYLELMKKVLDEGTQKNDRTGTGTLSIFGHQMRFNLQEGFPLVTTKRCHLRSIIHELLWFLQGDTNIAYLHENNVTIWDEWADENGDLGPVYGKQWRAWPTPDGHHIDQITTVLSQLKNDPDSRRIIVSAWNVGELDKMALAPCHAFFQFYVADRKLSCQLYQRSCDVFLGLPFNIASYALLVHMMAQQCDLEAGDFIWTGGDTHLYSNHMEQTHLQLSREPRALPKLVIKRKPDSLFDYRFDDFEIEGYDPHPGIKAPVAI.

Arginine 21 contributes to the dUMP binding site. Histidine 51 is a binding site for (6R)-5,10-methylene-5,6,7,8-tetrahydrofolate. 126-127 (RR) is a dUMP binding site. Cysteine 146 acts as the Nucleophile in catalysis. Residues 166 to 169 (RSCD), asparagine 177, and 207 to 209 (HLY) each bind dUMP. Residue aspartate 169 participates in (6R)-5,10-methylene-5,6,7,8-tetrahydrofolate binding. A (6R)-5,10-methylene-5,6,7,8-tetrahydrofolate-binding site is contributed by alanine 263.

The protein belongs to the thymidylate synthase family. Bacterial-type ThyA subfamily. Homodimer.

It localises to the cytoplasm. The enzyme catalyses dUMP + (6R)-5,10-methylene-5,6,7,8-tetrahydrofolate = 7,8-dihydrofolate + dTMP. It participates in pyrimidine metabolism; dTTP biosynthesis. Functionally, catalyzes the reductive methylation of 2'-deoxyuridine-5'-monophosphate (dUMP) to 2'-deoxythymidine-5'-monophosphate (dTMP) while utilizing 5,10-methylenetetrahydrofolate (mTHF) as the methyl donor and reductant in the reaction, yielding dihydrofolate (DHF) as a by-product. This enzymatic reaction provides an intracellular de novo source of dTMP, an essential precursor for DNA biosynthesis. The chain is Thymidylate synthase from Salmonella arizonae (strain ATCC BAA-731 / CDC346-86 / RSK2980).